The chain runs to 254 residues: Enolase-phosphatase E1 (254 aa).

Mg(2+) is bound by residues D13 and E15. Substrate-binding positions include 127-128 (SS) and K173. Residue D200 participates in Mg(2+) binding.

It belongs to the HAD-like hydrolase superfamily. MasA/MtnC family. As to quaternary structure, monomer. The cofactor is Mg(2+).

The protein resides in the cytoplasm. The protein localises to the nucleus. It catalyses the reaction 5-methylsulfanyl-2,3-dioxopentyl phosphate + H2O = 1,2-dihydroxy-5-(methylsulfanyl)pent-1-en-3-one + phosphate. The protein operates within amino-acid biosynthesis; L-methionine biosynthesis via salvage pathway; L-methionine from S-methyl-5-thio-alpha-D-ribose 1-phosphate: step 3/6. It functions in the pathway amino-acid biosynthesis; L-methionine biosynthesis via salvage pathway; L-methionine from S-methyl-5-thio-alpha-D-ribose 1-phosphate: step 4/6. In terms of biological role, bifunctional enzyme that catalyzes the enolization of 2,3-diketo-5-methylthiopentyl-1-phosphate (DK-MTP-1-P) into the intermediate 2-hydroxy-3-keto-5-methylthiopentenyl-1-phosphate (HK-MTPenyl-1-P), which is then dephosphorylated to form the acireductone 1,2-dihydroxy-3-keto-5-methylthiopentene (DHK-MTPene). This is Enolase-phosphatase E1 (utr4) from Sclerotinia sclerotiorum (strain ATCC 18683 / 1980 / Ss-1) (White mold).